The sequence spans 66 residues: DNA-directed RNA polymerase subunit Rpo10 (66 aa).

4 residues coordinate Zn(2+): cysteine 7, cysteine 10, cysteine 47, and cysteine 48.

Belongs to the archaeal Rpo10/eukaryotic RPB10 RNA polymerase subunit family. As to quaternary structure, part of the RNA polymerase complex. The cofactor is Zn(2+).

It localises to the cytoplasm. It catalyses the reaction RNA(n) + a ribonucleoside 5'-triphosphate = RNA(n+1) + diphosphate. DNA-dependent RNA polymerase (RNAP) catalyzes the transcription of DNA into RNA using the four ribonucleoside triphosphates as substrates. The polypeptide is DNA-directed RNA polymerase subunit Rpo10 (Haloarcula marismortui (strain ATCC 43049 / DSM 3752 / JCM 8966 / VKM B-1809) (Halobacterium marismortui)).